We begin with the raw amino-acid sequence, 951 residues long: MLPLPSELQIQAQSIKQRFSELPAPPDLRDEDIAVLALSDFVSDMLLIHPQWLEELHQQPPQPQEWQYYSQWLSQALAGVQDEAALLTALRLFRRRVMVRIAWSQVLQTSGTAETLQQLSTLAESMIIAARDWLYQVCCRELGTPCNRQGVPQPLLILGMGKLGGGELNFSSDIDLIFAYPENGQTQGGRRELDNAQFFTRLGQRLIKALDQHTIDGFVYRVDMRLRPFGDSGPLVLSFAALEDYYQEQGRDWERYAMVKARLMGGADDPYSQELRQMLRPFVFRRYIDFSVIQSLRNMKGMIAREVRRRGLKDNIKLGAGGIREIEFITQVFQLIRGGREPRLQERALLPTLQAVAELGLLPEQQVADLSGSYLFLRRLENLLQAIADEQTQTLPNDPLNQARLAWGMGYADWAAMSTALENHMQAVRVVFDDLIGDETPDIGEDPSHGLYKSLWQDVLEESDLAPLTPHLEEAARRQLLATISGFRHDVDKRTIGPRGREVLDQLMPRLFAEVCSRPDANVALSRLILLLLSIVTRTTYLELLVEYHAALKHVIRLCSASPMVASQLARYPLLLDELLDPQSLYQPLAPSAYRDELRQYLLRVPEDDEEQQLEALRQFKQAQQLRIAAGDITEALPVMKVSDHLTYLAEAIIDAVIQQAWNQMVARYGQPSHLQQSEGRGFAVIGYGKLGGWELGYSSDLDLVFLLDCPLDVMTDGDRSIDGRQFYLRLAQRIMHLFSTRTSSGILYEVDARLRPSGEAGMLVSTIEAFADYQRNEAWTWEHQALVRARIVYGSPKLHQQFDAIRQQILCRHREDPQLQQEVREMREKMRNHLGSKQRDIFDIKADAGGITDIEFIAQYLVLRYAASEPRLTRWSDNVRIFESMAHYDIMSPEEAAALTRAYVTMRDEIHHLALQEQSSKVAADSFIAEREQVAASWHKWLAANDANVS.

The adenylyl removase stretch occupies residues 1–440; that stretch reads MLPLPSELQI…VFDDLIGDET (440 aa). The adenylyl transferase stretch occupies residues 449 to 951; the sequence is HGLYKSLWQD…WLAANDANVS (503 aa).

It belongs to the GlnE family. It depends on Mg(2+) as a cofactor.

The catalysed reaction is [glutamine synthetase]-O(4)-(5'-adenylyl)-L-tyrosine + phosphate = [glutamine synthetase]-L-tyrosine + ADP. It carries out the reaction [glutamine synthetase]-L-tyrosine + ATP = [glutamine synthetase]-O(4)-(5'-adenylyl)-L-tyrosine + diphosphate. Involved in the regulation of glutamine synthetase GlnA, a key enzyme in the process to assimilate ammonia. When cellular nitrogen levels are high, the C-terminal adenylyl transferase (AT) inactivates GlnA by covalent transfer of an adenylyl group from ATP to specific tyrosine residue of GlnA, thus reducing its activity. Conversely, when nitrogen levels are low, the N-terminal adenylyl removase (AR) activates GlnA by removing the adenylyl group by phosphorolysis, increasing its activity. The regulatory region of GlnE binds the signal transduction protein PII (GlnB) which indicates the nitrogen status of the cell. The chain is Bifunctional glutamine synthetase adenylyltransferase/adenylyl-removing enzyme from Yersinia pseudotuberculosis serotype O:1b (strain IP 31758).